A 102-amino-acid chain; its full sequence is Putative pterin-4-alpha-carbinolamine dehydratase (102 aa).

Belongs to the pterin-4-alpha-carbinolamine dehydratase family.

The enzyme catalyses (4aS,6R)-4a-hydroxy-L-erythro-5,6,7,8-tetrahydrobiopterin = (6R)-L-erythro-6,7-dihydrobiopterin + H2O. The chain is Putative pterin-4-alpha-carbinolamine dehydratase from Burkholderia vietnamiensis (strain G4 / LMG 22486) (Burkholderia cepacia (strain R1808)).